A 335-amino-acid chain; its full sequence is N-acetyl-gamma-glutamyl-phosphate reductase (335 aa).

The active site involves Cys-147.

The protein belongs to the NAGSA dehydrogenase family. Type 1 subfamily.

The protein resides in the cytoplasm. It carries out the reaction N-acetyl-L-glutamate 5-semialdehyde + phosphate + NADP(+) = N-acetyl-L-glutamyl 5-phosphate + NADPH + H(+). The protein operates within amino-acid biosynthesis; L-arginine biosynthesis; N(2)-acetyl-L-ornithine from L-glutamate: step 3/4. Catalyzes the NADPH-dependent reduction of N-acetyl-5-glutamyl phosphate to yield N-acetyl-L-glutamate 5-semialdehyde. The polypeptide is N-acetyl-gamma-glutamyl-phosphate reductase (Campylobacter hominis (strain ATCC BAA-381 / DSM 21671 / CCUG 45161 / LMG 19568 / NCTC 13146 / CH001A)).